A 984-amino-acid polypeptide reads, in one-letter code: Putative formate dehydrogenase SAV2309 (984 aa).

The 2Fe-2S ferredoxin-type domain maps to 3-79 (EHLVVTLDGK…PMTVNTVNND (77 aa)). [2Fe-2S] cluster-binding residues include cysteine 37, cysteine 48, cysteine 51, and cysteine 63. The region spanning 79 to 119 (DVKDAQKEALDRILEKHMLYCTVCDYNNGDCEIHNTMDAWG) is the 4Fe-4S His(Cys)3-ligated-type domain. Residues histidine 95, cysteine 99, cysteine 102, cysteine 109, cysteine 147, cysteine 150, cysteine 153, cysteine 157, cysteine 190, cysteine 193, cysteine 196, cysteine 200, cysteine 264, cysteine 267, cysteine 271, and cysteine 299 each coordinate [4Fe-4S] cluster. 4Fe-4S ferredoxin-type domains are found at residues 138 to 165 (PFYR…VNET) and 181 to 211 (NDVP…VNME). Residues 252–984 (MRKERIKKTK…YVFPGNQVDK (733 aa)) form a formate dehydrogenase region. The region spanning 257 to 313 (IKKTKTVCTYCGVGCSFEVWTKDREILKVQPSHDSPANKIVTCVKGKFSWGHINSDQ) is the 4Fe-4S Mo/W bis-MGD-type domain.

It in the C-terminal section; belongs to the prokaryotic molybdopterin-containing oxidoreductase family. [2Fe-2S] cluster serves as cofactor. Requires [4Fe-4S] cluster as cofactor. It depends on Mo-bis(molybdopterin guanine dinucleotide) as a cofactor.

It catalyses the reaction formate + NAD(+) = CO2 + NADH. The sequence is that of Putative formate dehydrogenase SAV2309 from Staphylococcus aureus (strain Mu50 / ATCC 700699).